The sequence spans 345 residues: Heat stress transcription factor A-4c (345 aa).

A DNA-binding region spans residues 11 to 105 (LPPFLTKTYE…LMKNIHRRKP (95 aa)). The interval 119–185 (PLTESERRSM…SIVAYVSQVL (67 aa)) is hydrophobic repeat HR-A/B. Residues 199-203 (RRKRR) carry the Nuclear localization signal motif. Residues 226-235 (LTFWENLVSE) carry the AHA1 motif. The disordered stretch occupies residues 240–329 (SGLQSSSMDH…NGNKIGNQRT (90 aa)). Residues 274–283 (PPVTVTAPAP) show a composition bias toward low complexity. The AHA2 signature appears at 289-298 (DDFWEQCLTE). Composition is skewed to polar residues over residues 296-308 (LTEN…QQEV) and 317-329 (NDNN…NQRT).

Belongs to the HSF family. Class A subfamily. In terms of assembly, homotrimer. Exhibits temperature-dependent phosphorylation. Expressed in roots, seedlings and at lower levels in leaves.

It localises to the nucleus. Its function is as follows. Transcriptional activator that specifically binds DNA sequence 5'-AGAAnnTTCT-3' known as heat shock promoter elements (HSE). May be involved in general response to auxin. This chain is Heat stress transcription factor A-4c (HSFA4C), found in Arabidopsis thaliana (Mouse-ear cress).